The chain runs to 259 residues: Bidirectional sugar transporter SWEET6a (259 aa).

The Extracellular portion of the chain corresponds to 1 to 9; that stretch reads MISPDAARN. The helical transmembrane segment at 10–30 threads the bilayer; that stretch reads VVGIIGNVISFGLFLAPVPTF. One can recognise a MtN3/slv 1 domain in the interval 10–98; that stretch reads VVGIIGNVIS…IFFLYSPNKK (89 aa). Residues 31-45 are Cytoplasmic-facing; the sequence is WRICKRKDVEEFKAD. A helical membrane pass occupies residues 46-66; it reads PYLATLLNCMLWVFYGIPVVH. Residues 67–69 lie on the Extracellular side of the membrane; the sequence is PNS. Residues 70-90 traverse the membrane as a helical segment; it reads ILVVTINGIGLLVEGTYLLIF. Over 91 to 103 the chain is Cytoplasmic; the sequence is FLYSPNKKRLRMC. A helical transmembrane segment spans residues 104–124; sequence AVLGVELVFMLAVILGVLLGA. At 125–131 the chain is on the extracellular side; the sequence is HTHEKRS. Residues 132 to 152 form a helical membrane-spanning segment; the sequence is MIVGILCVFFGSIMYFSPLTI. In terms of domain architecture, MtN3/slv 2 spans 133–216; sequence IVGILCVFFG…LILYACYYRT (84 aa). The Cytoplasmic segment spans residues 153-165; sequence MGKVIKTKSVEYM. Residues 166-186 traverse the membrane as a helical segment; that stretch reads PFFLSLVCFLNGVCWTAYALI. At 187-189 the chain is on the extracellular side; it reads RFD. The helical transmembrane segment at 190-210 threads the bilayer; the sequence is IYVTIPNGLGALFGAIQLILY. At 211–259 the chain is on the cytoplasmic side; the sequence is ACYYRTTPKKTKAAKDVEMPSVVVSGTGAAAAAGGGNTGGGSISVTVER.

This sequence belongs to the SWEET sugar transporter family. Forms homooligomers and/or heterooligomers.

The protein localises to the cell membrane. Functionally, mediates both low-affinity uptake and efflux of sugar across the plasma membrane. The polypeptide is Bidirectional sugar transporter SWEET6a (SWEET6A) (Oryza sativa subsp. indica (Rice)).